The sequence spans 248 residues: Transcription factor bHLH35 (248 aa).

Residues 37–54 (SGSYDSSSPDGAASSPAS) show a composition bias toward low complexity. The tract at residues 37–60 (SGSYDSSSPDGAASSPASKNIVSE) is disordered. The region spanning 51–100 (SPASKNIVSERNRRQKLNQRLFALRSVVPNITKMDKASIIKDAISYIEGL) is the bHLH domain.

As to quaternary structure, homodimer. Expressed constitutively in roots, leaves, stems, and flowers.

It localises to the nucleus. In Arabidopsis thaliana (Mouse-ear cress), this protein is Transcription factor bHLH35 (BHLH35).